The primary structure comprises 278 residues: MGLKASLSLLSLTILLVFSKVVTANNITLAFQKYSKFSTMRDLFIKTKLIAAIDKYQTITVLAVSNDAISSITNRSEVELRNILMTHVILDYYDELKLQGMREKSIMLTTLYQTTGLGEQMNGFLNVSKSKGRVYFGSEVKNSPLNAEYVSTVYHNPYNLSIIQITMPIVAPGLSLAIFPPPPPYVHVAPYPTPMDASVVPAPGPAADDNSPDSAVPKTPPAPATDTPEADSPAPAPSADNEKIEAADKAKPSSSASKAGWSFDVILLLAFLASFAGF.

The first 24 residues, 1–24 (MGLKASLSLLSLTILLVFSKVVTA), serve as a signal peptide directing secretion. The FAS1 domain occupies 25 to 169 (NNITLAFQKY…LSIIQITMPI (145 aa)). Residues asparagine 26, asparagine 74, asparagine 126, and asparagine 159 are each glycosylated (N-linked (GlcNAc...) asparagine). The interval 199-257 (VVPAPGPAADDNSPDSAVPKTPPAPATDTPEADSPAPAPSADNEKIEAADKAKPSSSAS) is disordered. The span at 224 to 239 (ATDTPEADSPAPAPSA) shows a compositional bias: low complexity. The segment covering 240–251 (DNEKIEAADKAK) has biased composition (basic and acidic residues). A lipid anchor (GPI-anchor amidated serine) is attached at serine 255. Residues 256 to 278 (ASKAGWSFDVILLLAFLASFAGF) constitute a propeptide, removed in mature form.

This sequence belongs to the fasciclin-like AGP family.

The protein localises to the cell membrane. May be a cell surface adhesion protein. This is Fasciclin-like arabinogalactan protein 5 (FLA5) from Arabidopsis thaliana (Mouse-ear cress).